Here is a 234-residue protein sequence, read N- to C-terminus: Ribonuclease HII (234 aa).

The RNase H type-2 domain occupies 16–207; sequence ALVAGVDEAG…VRRMLTPKAI (192 aa). 3 residues coordinate a divalent metal cation: Asp22, Glu23, and Asp115.

It belongs to the RNase HII family. Requires Mn(2+) as cofactor. It depends on Mg(2+) as a cofactor.

The protein localises to the cytoplasm. The catalysed reaction is Endonucleolytic cleavage to 5'-phosphomonoester.. Endonuclease that specifically degrades the RNA of RNA-DNA hybrids. The protein is Ribonuclease HII of Xylella fastidiosa (strain M23).